A 373-amino-acid polypeptide reads, in one-letter code: Chaperone protein DnaJ (373 aa).

The J domain maps to 4–68 (DFYEILGVSR…QARANYDRFG (65 aa)). The segment at 132–214 (GGEKEIRINH…CGGQGHIQVS (83 aa)) adopts a CR-type zinc-finger fold. Zn(2+) is bound by residues C145, C148, C162, C165, C188, C191, C202, and C205. 4 CXXCXGXG motif repeats span residues 145 to 152 (CKTCQGTG), 162 to 169 (CSTCGGVG), 188 to 195 (CPTCGGSG), and 202 to 209 (CESCGGQG).

It belongs to the DnaJ family. In terms of assembly, homodimer. Zn(2+) is required as a cofactor.

The protein resides in the cytoplasm. In terms of biological role, participates actively in the response to hyperosmotic and heat shock by preventing the aggregation of stress-denatured proteins and by disaggregating proteins, also in an autonomous, DnaK-independent fashion. Unfolded proteins bind initially to DnaJ; upon interaction with the DnaJ-bound protein, DnaK hydrolyzes its bound ATP, resulting in the formation of a stable complex. GrpE releases ADP from DnaK; ATP binding to DnaK triggers the release of the substrate protein, thus completing the reaction cycle. Several rounds of ATP-dependent interactions between DnaJ, DnaK and GrpE are required for fully efficient folding. Also involved, together with DnaK and GrpE, in the DNA replication of plasmids through activation of initiation proteins. This chain is Chaperone protein DnaJ, found in Thermosynechococcus vestitus (strain NIES-2133 / IAM M-273 / BP-1).